A 65-amino-acid chain; its full sequence is Large ribosomal subunit protein bL32 (65 aa).

The span at M1–H19 shows a compositional bias: basic residues. The segment at M1 to E32 is disordered.

Belongs to the bacterial ribosomal protein bL32 family.

This chain is Large ribosomal subunit protein bL32, found in Vesicomyosocius okutanii subsp. Calyptogena okutanii (strain HA).